The chain runs to 493 residues: Putative MgpC-like protein MPN_414 (493 aa).

Residues 1-14 show a composition bias toward polar residues; sequence MKPTSLPKNFTNNP. 2 disordered regions span residues 1-92 and 441-493; these read MKPT…GHNS and KSAR…SGNH. 2 stretches are compositionally biased toward basic and acidic residues: residues 25–34 and 44–56; these read DNGRAYRKLN and DSTKDGKGKDKDG. Composition is skewed to polar residues over residues 72-92 and 445-472; these read VSSTGSQMSAVTDSQQSGHNS and ENAQSTSDDNSNTKVKWTKPPRTTSPCR. Positions 482 to 493 are enriched in basic and acidic residues; sequence RVTEEERSSGNH.

Belongs to the MgpC family.

In Mycoplasma pneumoniae (strain ATCC 29342 / M129 / Subtype 1) (Mycoplasmoides pneumoniae), this protein is Putative MgpC-like protein MPN_414.